Here is a 340-residue protein sequence, read N- to C-terminus: Glycerol-3-phosphate dehydrogenase [NAD(P)+] (340 aa).

4 residues coordinate NADPH: serine 11, tryptophan 12, arginine 33, and lysine 106. 3 residues coordinate sn-glycerol 3-phosphate: lysine 106, glycine 137, and serine 139. NADPH is bound at residue alanine 141. Sn-glycerol 3-phosphate contacts are provided by lysine 192, aspartate 245, serine 255, arginine 256, and asparagine 257. Residue lysine 192 is the Proton acceptor of the active site. Arginine 256 contributes to the NADPH binding site. Residues valine 280 and glutamate 282 each coordinate NADPH.

The protein belongs to the NAD-dependent glycerol-3-phosphate dehydrogenase family.

The protein localises to the cytoplasm. It carries out the reaction sn-glycerol 3-phosphate + NAD(+) = dihydroxyacetone phosphate + NADH + H(+). The enzyme catalyses sn-glycerol 3-phosphate + NADP(+) = dihydroxyacetone phosphate + NADPH + H(+). It functions in the pathway membrane lipid metabolism; glycerophospholipid metabolism. In terms of biological role, catalyzes the reduction of the glycolytic intermediate dihydroxyacetone phosphate (DHAP) to sn-glycerol 3-phosphate (G3P), the key precursor for phospholipid synthesis. This is Glycerol-3-phosphate dehydrogenase [NAD(P)+] from Bacillus cereus (strain ATCC 10987 / NRS 248).